A 47-amino-acid polypeptide reads, in one-letter code: Protein YpaB (47 aa).

The protein is Protein YpaB (ypaB) of Escherichia coli (strain K12).